The following is a 305-amino-acid chain: Homoserine O-acetyltransferase (305 aa).

The Acyl-thioester intermediate role is filled by C142. Substrate contacts are provided by K163 and S192. Residue H235 is the Proton acceptor of the active site. Residue E237 is part of the active site. R249 lines the substrate pocket.

This sequence belongs to the MetA family.

Its subcellular location is the cytoplasm. The catalysed reaction is L-homoserine + acetyl-CoA = O-acetyl-L-homoserine + CoA. It functions in the pathway amino-acid biosynthesis; L-methionine biosynthesis via de novo pathway; O-acetyl-L-homoserine from L-homoserine: step 1/1. Its function is as follows. Transfers an acetyl group from acetyl-CoA to L-homoserine, forming acetyl-L-homoserine. This is Homoserine O-acetyltransferase from Dinoroseobacter shibae (strain DSM 16493 / NCIMB 14021 / DFL 12).